A 337-amino-acid chain; its full sequence is MTQPIARSIPLQVVSGDTAAPASLQTGVKQIGGDKINRSPVQFVDAPVLRKPSWIRVRIPSGNAVQNLKAKLRENRLVTVCEEASCPNIHECFSHGTATFMILGEVCTRRCSFCDVAHGRPKPPDASEPTSLATTVADMGLKYVVVTSVDRDDLRDGGAQHFVDCISAIRASAPKTRIEILTPDFRGKGRMDRALEILATSPPDVFNHNIETVPDLYPNVRPGADYQWSLTLLQRFKAQHPTIATKSGIMLGLGETMEQVQATLRDLRAHDVDMITIGQYLQPTPHHHPVMRYWTPEEYKALEDYGNALGFSHVASGPMVRSSYHADRQAAGAGVAA.

[4Fe-4S] cluster is bound by residues C81, C86, C92, C107, C111, C114, and S323. In terms of domain architecture, Radical SAM core spans 93-312 (FSHGTATFMI…EDYGNALGFS (220 aa)).

It belongs to the radical SAM superfamily. Lipoyl synthase family. It depends on [4Fe-4S] cluster as a cofactor.

Its subcellular location is the cytoplasm. It catalyses the reaction [[Fe-S] cluster scaffold protein carrying a second [4Fe-4S](2+) cluster] + N(6)-octanoyl-L-lysyl-[protein] + 2 oxidized [2Fe-2S]-[ferredoxin] + 2 S-adenosyl-L-methionine + 4 H(+) = [[Fe-S] cluster scaffold protein] + N(6)-[(R)-dihydrolipoyl]-L-lysyl-[protein] + 4 Fe(3+) + 2 hydrogen sulfide + 2 5'-deoxyadenosine + 2 L-methionine + 2 reduced [2Fe-2S]-[ferredoxin]. It functions in the pathway protein modification; protein lipoylation via endogenous pathway; protein N(6)-(lipoyl)lysine from octanoyl-[acyl-carrier-protein]: step 2/2. Catalyzes the radical-mediated insertion of two sulfur atoms into the C-6 and C-8 positions of the octanoyl moiety bound to the lipoyl domains of lipoate-dependent enzymes, thereby converting the octanoylated domains into lipoylated derivatives. The polypeptide is Lipoyl synthase (Xanthomonas campestris pv. campestris (strain B100)).